We begin with the raw amino-acid sequence, 423 residues long: Histidine--tRNA ligase (423 aa).

This sequence belongs to the class-II aminoacyl-tRNA synthetase family. As to quaternary structure, homodimer.

The protein localises to the cytoplasm. It carries out the reaction tRNA(His) + L-histidine + ATP = L-histidyl-tRNA(His) + AMP + diphosphate + H(+). The protein is Histidine--tRNA ligase of Prochlorococcus marinus (strain MIT 9211).